A 232-amino-acid polypeptide reads, in one-letter code: 2,3,4,5-tetrahydropyridine-2,6-dicarboxylate N-acetyltransferase (232 aa).

Belongs to the transferase hexapeptide repeat family. DapH subfamily.

The enzyme catalyses (S)-2,3,4,5-tetrahydrodipicolinate + acetyl-CoA + H2O = L-2-acetamido-6-oxoheptanedioate + CoA. It participates in amino-acid biosynthesis; L-lysine biosynthesis via DAP pathway; LL-2,6-diaminopimelate from (S)-tetrahydrodipicolinate (acetylase route): step 1/3. Catalyzes the transfer of an acetyl group from acetyl-CoA to tetrahydrodipicolinate. The protein is 2,3,4,5-tetrahydropyridine-2,6-dicarboxylate N-acetyltransferase of Streptococcus pneumoniae serotype 4 (strain ATCC BAA-334 / TIGR4).